Here is a 155-residue protein sequence, read N- to C-terminus: DNA polymerase epsilon subunit 4 (155 aa).

Acidic residues-rich tracts occupy residues 1–16 (MASEELFEAEFSEEQD) and 24–48 (ETEEAELAETEEPLEITEESPDNPE). The interval 1 to 76 (MASEELFEAE…APADNEAKMT (76 aa)) is disordered. Residues 49–65 (AESTTEQLTEKPVTNGN) show a composition bias toward polar residues.

Component of the DNA polymerase epsilon complex consisting of four subunits: the catalytic subunit PolE1/DNApol-epsilon255 and the accessory subunits PolE2/DNApol-epsilon58, Chrac-14/DNApolE3 and PolE4/Mes4.

It localises to the nucleus. Functionally, accessory component of the DNA polymerase epsilon complex. Participates in DNA repair and in chromosomal DNA replication. Has a role in cell cycle progression. Required for wing morphogenesis. In Drosophila melanogaster (Fruit fly), this protein is DNA polymerase epsilon subunit 4.